We begin with the raw amino-acid sequence, 256 residues long: C-8 sterol isomerase (256 aa).

Residues 1–31 (MPPKKQSSSGGNKPSGSGSSSGRSSSGSSCR) are disordered. The segment covering 7–30 (SSSGGNKPSGSGSSSGRSSSGSSC) has biased composition (low complexity). A helical membrane pass occupies residues 40 to 60 (IGGWLKFFAILFALVAPIAYV).

This sequence belongs to the ERG2 family.

The protein resides in the endoplasmic reticulum membrane. It functions in the pathway steroid metabolism; ergosterol biosynthesis; ergosterol from zymosterol: step 2/5. Its function is as follows. Catalyzes the reaction which results in unsaturation at C-7 in the B ring of sterols. This chain is C-8 sterol isomerase (erg-1), found in Neurospora crassa (strain ATCC 24698 / 74-OR23-1A / CBS 708.71 / DSM 1257 / FGSC 987).